A 395-amino-acid chain; its full sequence is Cuticlin-5 (395 aa).

The N-terminal stretch at 1–18 (MNFILAVFAIILLQAVRG) is a signal peptide. Residues 19–358 (EIDNAIVGDP…ELCMTAIGTT (340 aa)) lie on the Extracellular side of the membrane. One can recognise a ZP domain in the interval 46–291 (SCVGNFIIKV…DYCDVPSCPD (246 aa)). N-linked (GlcNAc...) asparagine glycosylation is found at Asn-90 and Asn-307. The helical transmembrane segment at 359–379 (LLVFLNAFLFIISLVSIVHVC) threads the bilayer. The Cytoplasmic segment spans residues 380 to 395 (CFRTSPKLEKTKSTML).

It localises to the cell membrane. In terms of biological role, plays a role in alae formation in L1 and dauer stage larvae. This chain is Cuticlin-5, found in Caenorhabditis elegans.